The primary structure comprises 1296 residues: Phosphoribosylformylglycinamidine synthase (1296 aa).

The disordered stretch occupies residues 304-323; it reads WPGAATGSGGEIRDEGATGR. Residues 306-317 and alanine 677 contribute to the ATP site; that span reads GAATGSGGEIRD. The Mg(2+) site is built by aspartate 678, glutamate 717, asparagine 721, and aspartate 885. Serine 887 provides a ligand contact to ATP. A compositionally biased stretch (basic and acidic residues) spans 1000–1013; the sequence is PDCADQEHQAKQDE. The disordered stretch occupies residues 1000 to 1019; sequence PDCADQEHQAKQDESDPGLN. Residues 1043 to 1296 enclose the Glutamine amidotransferase type-1 domain; sequence VAVLREQGVN…MFRNARKQLG (254 aa). Cysteine 1136 serves as the catalytic Nucleophile. Active-site residues include histidine 1261 and glutamate 1263.

In the N-terminal section; belongs to the FGAMS family. In terms of assembly, monomer.

It localises to the cytoplasm. The catalysed reaction is N(2)-formyl-N(1)-(5-phospho-beta-D-ribosyl)glycinamide + L-glutamine + ATP + H2O = 2-formamido-N(1)-(5-O-phospho-beta-D-ribosyl)acetamidine + L-glutamate + ADP + phosphate + H(+). Its pathway is purine metabolism; IMP biosynthesis via de novo pathway; 5-amino-1-(5-phospho-D-ribosyl)imidazole from N(2)-formyl-N(1)-(5-phospho-D-ribosyl)glycinamide: step 1/2. Functionally, phosphoribosylformylglycinamidine synthase involved in the purines biosynthetic pathway. Catalyzes the ATP-dependent conversion of formylglycinamide ribonucleotide (FGAR) and glutamine to yield formylglycinamidine ribonucleotide (FGAM) and glutamate. This chain is Phosphoribosylformylglycinamidine synthase, found in Yersinia pseudotuberculosis serotype I (strain IP32953).